The sequence spans 385 residues: Flavin-dependent monooxygenase (385 aa).

Residues 12-15 (ASIA), 34-36 (EKN), 44-47 (YAID), Arg-105, Tyr-267, Asp-289, and 296-302 (PLSGQGT) contribute to the FAD site.

Belongs to the aromatic-ring hydroxylase family. FAD is required as a cofactor.

The catalysed reaction is 7-chlorotetracycline + NADPH + O2 + H(+) = (1S,10S,10aS)-3-(CONH2)-9-Cl-1-(Me2N)-3,3a,4,10-(HO)4-10-Me-2,5-dioxo-1H,10aH,11H,11aH-cyclopenta[b]anthracen-6-olate + CO + NADP(+) + H2O. It catalyses the reaction a tetracycline + NADPH + O2 + H(+) = a (1S,10aS)-3-(CONH2)-1-(Me2N)-3,3a,4,6-(HO)4-2,5-dioxo-1H,10aH,11H,11aH-cyclopenta[b]anthracene + CO + NADP(+) + H2O. Its activity is regulated as follows. Inhibited by anhydrotetracycline. An FAD-requiring monooxygenase active on tetracycline antibiotic and some of its derivatives, which leads to their inactivation. Expression in E.coli confers high resistance to oxytetracycline, slightly less resistance to tetracycline, moderate resistance to minocycline but no resistance to tigecycline. Degrades tetracycline and oxytetracycline; the reaction requires NADPH. Degrades and confers resistance to chlortetracycline. This chain is Flavin-dependent monooxygenase, found in Unknown prokaryotic organism.